The chain runs to 124 residues: uncharacterized protein (124 aa).

The protein belongs to the asfivirus H124R family.

Its subcellular location is the virion. This is an uncharacterized protein from Ornithodoros (relapsing fever ticks).